Consider the following 765-residue polypeptide: Phosphoribosylformylglycinamidine synthase subunit PurL (765 aa).

The segment covering 1–13 has biased composition (polar residues); sequence MTVSPTSAPTQAI. The tract at residues 1-32 is disordered; sequence MTVSPTSAPTQAIDTVERAATTPDEPQPFGEL. Residue His-65 is part of the active site. Residues Tyr-68 and Lys-112 each contribute to the ATP site. Glu-114 provides a ligand contact to Mg(2+). Residues 115-118 and Arg-137 each bind substrate; that span reads SHNH. His-116 serves as the catalytic Proton acceptor. Asp-138 is a Mg(2+) binding site. Gln-263 contributes to the substrate binding site. Asp-291 contributes to the Mg(2+) binding site. Position 335–337 (335–337) interacts with substrate; that stretch reads ESQ. Positions 523 and 560 each coordinate ATP. Asn-561 lines the Mg(2+) pocket. Residue Ser-563 coordinates substrate.

Belongs to the FGAMS family. Monomer. Part of the FGAM synthase complex composed of 1 PurL, 1 PurQ and 2 PurS subunits.

The protein resides in the cytoplasm. It carries out the reaction N(2)-formyl-N(1)-(5-phospho-beta-D-ribosyl)glycinamide + L-glutamine + ATP + H2O = 2-formamido-N(1)-(5-O-phospho-beta-D-ribosyl)acetamidine + L-glutamate + ADP + phosphate + H(+). It participates in purine metabolism; IMP biosynthesis via de novo pathway; 5-amino-1-(5-phospho-D-ribosyl)imidazole from N(2)-formyl-N(1)-(5-phospho-D-ribosyl)glycinamide: step 1/2. In terms of biological role, part of the phosphoribosylformylglycinamidine synthase complex involved in the purines biosynthetic pathway. Catalyzes the ATP-dependent conversion of formylglycinamide ribonucleotide (FGAR) and glutamine to yield formylglycinamidine ribonucleotide (FGAM) and glutamate. The FGAM synthase complex is composed of three subunits. PurQ produces an ammonia molecule by converting glutamine to glutamate. PurL transfers the ammonia molecule to FGAR to form FGAM in an ATP-dependent manner. PurS interacts with PurQ and PurL and is thought to assist in the transfer of the ammonia molecule from PurQ to PurL. This is Phosphoribosylformylglycinamidine synthase subunit PurL from Mycolicibacterium paratuberculosis (strain ATCC BAA-968 / K-10) (Mycobacterium paratuberculosis).